Consider the following 436-residue polypeptide: Cyclic nucleotide-binding domain-containing protein 1 (436 aa).

Residues 89–105 are compositionally biased toward basic and acidic residues; sequence EQRELNEGKEESQHQQP. The segment at 89 to 108 is disordered; it reads EQRELNEGKEESQHQQPDDS. Residue 322–436 participates in a nucleoside 3',5'-cyclic phosphate binding; it reads YYEEWPTLSI…IIEDKDLFVA (115 aa).

This Homo sapiens (Human) protein is Cyclic nucleotide-binding domain-containing protein 1 (CNBD1).